Here is a 253-residue protein sequence, read N- to C-terminus: Probable transcriptional regulatory protein slr0989 (253 aa).

The tract at residues 1–22 (MGGRKWQSIKRQKARVDAQKGK) is disordered.

This sequence belongs to the TACO1 family.

It localises to the cytoplasm. The chain is Probable transcriptional regulatory protein slr0989 from Synechocystis sp. (strain ATCC 27184 / PCC 6803 / Kazusa).